Reading from the N-terminus, the 660-residue chain is tRNA 5-methylaminomethyl-2-thiouridine biosynthesis bifunctional protein MnmC (660 aa).

Positions 1–235 (MTITRHARID…KWEVLRGTFI (235 aa)) are tRNA (mnm(5)s(2)U34)-methyltransferase. The FAD-dependent cmnm(5)s(2)U34 oxidoreductase stretch occupies residues 266-660 (IGAGLAGCAT…LRGLIRGGGK (395 aa)).

This sequence in the N-terminal section; belongs to the methyltransferase superfamily. tRNA (mnm(5)s(2)U34)-methyltransferase family. In the C-terminal section; belongs to the DAO family. It depends on FAD as a cofactor.

Its subcellular location is the cytoplasm. The catalysed reaction is 5-aminomethyl-2-thiouridine(34) in tRNA + S-adenosyl-L-methionine = 5-methylaminomethyl-2-thiouridine(34) in tRNA + S-adenosyl-L-homocysteine + H(+). In terms of biological role, catalyzes the last two steps in the biosynthesis of 5-methylaminomethyl-2-thiouridine (mnm(5)s(2)U) at the wobble position (U34) in tRNA. Catalyzes the FAD-dependent demodification of cmnm(5)s(2)U34 to nm(5)s(2)U34, followed by the transfer of a methyl group from S-adenosyl-L-methionine to nm(5)s(2)U34, to form mnm(5)s(2)U34. The sequence is that of tRNA 5-methylaminomethyl-2-thiouridine biosynthesis bifunctional protein MnmC from Pseudomonas savastanoi pv. phaseolicola (strain 1448A / Race 6) (Pseudomonas syringae pv. phaseolicola (strain 1448A / Race 6)).